The chain runs to 1167 residues: Integrin alpha-E (1167 aa).

A signal peptide spans methionine 1–alanine 19. Topologically, residues phenylalanine 20–serine 1114 are extracellular. FG-GAP repeat units lie at residues alanine 27–isoleucine 81 and glutamine 84–glutamine 142. The N-linked (GlcNAc...) asparagine glycan is linked to asparagine 51. Intrachain disulfides connect cysteine 72/cysteine 83 and cysteine 130/cysteine 164. Positions glutamate 149 to aspartate 192 are X-domain (extra domain). The disordered stretch occupies residues tyrosine 163 to glutamate 191. The region spanning glycine 193 to methionine 382 is the VWFA domain. Asparagine 256, asparagine 314, asparagine 341, asparagine 364, asparagine 418, and asparagine 437 each carry an N-linked (GlcNAc...) asparagine glycan. Residues glutamate 383–phenylalanine 435 form an FG-GAP 3 repeat. 4 FG-GAP repeats span residues glutamine 438–aspartate 491, alanine 492–phenylalanine 552, alanine 555–aspartate 619, and glutamine 623–aspartate 683. The Ca(2+) site is built by aspartate 514, aspartate 516, aspartate 518, aspartate 522, aspartate 578, asparagine 580, aspartate 582, aspartate 586, aspartate 646, asparagine 648, aspartate 650, and aspartate 654. A disulfide bridge links cysteine 698 with cysteine 754. Residues asparagine 718 and asparagine 773 are each glycosylated (N-linked (GlcNAc...) asparagine). A disulfide bridge links cysteine 814 with cysteine 820. Asparagine 829 and asparagine 846 each carry an N-linked (GlcNAc...) asparagine glycan. A disulfide bridge links cysteine 884 with cysteine 898. N-linked (GlcNAc...) asparagine glycans are attached at residues asparagine 911, asparagine 925, asparagine 968, and asparagine 1013. Intrachain disulfides connect cysteine 998–cysteine 1023 and cysteine 1031–cysteine 1047. Residues asparagine 1055 and asparagine 1086 are each glycosylated (N-linked (GlcNAc...) asparagine). A helical transmembrane segment spans residues leucine 1115–phenylalanine 1137. The Cytoplasmic portion of the chain corresponds to lysine 1138 to aspartate 1167. The GFFKR motif signature appears at glycine 1140 to arginine 1144.

This sequence belongs to the integrin alpha chain family. As to quaternary structure, heterodimer of an alpha and a beta subunit. The alpha subunit is composed of a heavy and a light chains linked by a disulfide bond. Alpha-E associates with beta-7.

It localises to the membrane. Its function is as follows. Integrin alpha-E/beta-7 is a receptor for E-cadherin. It mediates adhesion of intra-epithelial T-lymphocytes to epithelial cell monolayers. Mice expressing a null mutation of the alpha-E subunit gene exhibit a marked reduction in the numbers of intraepithelial lymphocytes in the gut and in the development of gut-associated lymphoid aggregates, supporting a specific role for this integrin in mediating retention of lymphocytes in the intestinal wall. The polypeptide is Integrin alpha-E (Itgae) (Mus musculus (Mouse)).